Reading from the N-terminus, the 487-residue chain is Protein nucleotidyltransferase YdiU (487 aa).

ATP-binding residues include G90, G92, R93, K113, D125, G126, R176, and R183. Residue D252 is the Proton acceptor of the active site. N253 and D262 together coordinate Mg(2+). D262 contacts ATP.

It belongs to the SELO family. The cofactor is Mg(2+). Requires Mn(2+) as cofactor.

It catalyses the reaction L-seryl-[protein] + ATP = 3-O-(5'-adenylyl)-L-seryl-[protein] + diphosphate. The enzyme catalyses L-threonyl-[protein] + ATP = 3-O-(5'-adenylyl)-L-threonyl-[protein] + diphosphate. The catalysed reaction is L-tyrosyl-[protein] + ATP = O-(5'-adenylyl)-L-tyrosyl-[protein] + diphosphate. It carries out the reaction L-histidyl-[protein] + UTP = N(tele)-(5'-uridylyl)-L-histidyl-[protein] + diphosphate. It catalyses the reaction L-seryl-[protein] + UTP = O-(5'-uridylyl)-L-seryl-[protein] + diphosphate. The enzyme catalyses L-tyrosyl-[protein] + UTP = O-(5'-uridylyl)-L-tyrosyl-[protein] + diphosphate. Its function is as follows. Nucleotidyltransferase involved in the post-translational modification of proteins. It can catalyze the addition of adenosine monophosphate (AMP) or uridine monophosphate (UMP) to a protein, resulting in modifications known as AMPylation and UMPylation. This Ectopseudomonas mendocina (strain ymp) (Pseudomonas mendocina) protein is Protein nucleotidyltransferase YdiU.